The sequence spans 561 residues: Mesoderm induction early response protein 2 (561 aa).

Disordered stretches follow at residues 1–28 and 52–188; these read MAEA…GEPN and QNYG…EDPL. Residue S11 is modified to Phosphoserine. Polar residues predominate over residues 140-165; sequence QSSADDLTPSVTSHEASDLFPSQSGS. The ELM2 domain maps to 195-292; sequence KEIMVGPQFQ…EALRRLRFNV (98 aa). The SANT domain maps to 297–349; that stretch reads DGLCAWSEEERRNFEHGFRVHGKNFHLIQANKVRTRSVGECVEYYYLWKKSER. A disordered region spans residues 360–515; that stretch reads GRRKYGPSGN…DGEPEETVGP (156 aa). Low complexity predominate over residues 417–428; it reads LSMGSSMSRSLG. A compositionally biased stretch (pro residues) spans 439–451; it reads SSEPGPRLFPPLD. The span at 453–482 shows a compositional bias: low complexity; that stretch reads PSALPSSRRPPALAEPAFFPPATAAPEPGA.

In terms of assembly, part of a complex containing at least CDYL, MIER1, MIER2, HDAC1 and HDAC2.

The protein localises to the nucleus. Transcriptional repressor. This chain is Mesoderm induction early response protein 2 (MIER2), found in Bos taurus (Bovine).